The following is an 85-amino-acid chain: Large ribosomal subunit protein bL27 (85 aa).

The segment covering 1 to 13 (MAKTKSGGSTSNG) has biased composition (polar residues). A disordered region spans residues 1–26 (MAKTKSGGSTSNGRDSKGRRLGQKLG).

This sequence belongs to the bacterial ribosomal protein bL27 family.

The protein is Large ribosomal subunit protein bL27 of Mycoplasma mobile (strain ATCC 43663 / 163K / NCTC 11711) (Mesomycoplasma mobile).